The sequence spans 492 residues: ATP synthase subunit beta, plastid (492 aa).

170-177 (GGAGVGKT) contributes to the ATP binding site.

The protein belongs to the ATPase alpha/beta chains family. F-type ATPases have 2 components, CF(1) - the catalytic core - and CF(0) - the membrane proton channel. CF(1) has five subunits: alpha(3), beta(3), gamma(1), delta(1), epsilon(1). CF(0) has four main subunits: a(1), b(1), b'(1) and c(9-12).

It is found in the plastid membrane. It catalyses the reaction ATP + H2O + 4 H(+)(in) = ADP + phosphate + 5 H(+)(out). Functionally, produces ATP from ADP in the presence of a proton gradient across the membrane. The catalytic sites are hosted primarily by the beta subunits. This Aneura mirabilis (Parasitic liverwort) protein is ATP synthase subunit beta, plastid.